Consider the following 838-residue polypeptide: Translation initiation factor IF-2 (838 aa).

Disordered regions lie at residues 30–60 (PHTA…KVEE) and 94–254 (QRSP…PTGP). Composition is skewed to basic and acidic residues over residues 33-43 (AAEEHVSDSEK) and 96-136 (SPEE…EARR). Positions 137–173 (QPAPVAEPVAAQAAAPAPAPVVEPVQEAPVATAAPAA) are enriched in low complexity. 2 stretches are compositionally biased toward basic and acidic residues: residues 174-214 (DARK…EKAP) and 222-231 (TTDEESDGFR). A compositionally biased stretch (basic residues) spans 232 to 245 (RGGRGKAKLKKRNA). A tr-type G domain is found at 338–507 (ARAPVVTVMG…LLQAEVLELK (170 aa)). Residues 347–354 (GHVDHGKT) are G1. 347–354 (GHVDHGKT) contributes to the GTP binding site. The interval 372–376 (GITQH) is G2. The G3 stretch occupies residues 393–396 (DTPG). GTP is bound by residues 393–397 (DTPGH) and 447–450 (NKID). Residues 447-450 (NKID) are G4. The G5 stretch occupies residues 483–485 (SAK).

The protein belongs to the TRAFAC class translation factor GTPase superfamily. Classic translation factor GTPase family. IF-2 subfamily.

The protein resides in the cytoplasm. One of the essential components for the initiation of protein synthesis. Protects formylmethionyl-tRNA from spontaneous hydrolysis and promotes its binding to the 30S ribosomal subunits. Also involved in the hydrolysis of GTP during the formation of the 70S ribosomal complex. The protein is Translation initiation factor IF-2 of Pseudomonas fluorescens (strain ATCC BAA-477 / NRRL B-23932 / Pf-5).